Reading from the N-terminus, the 318-residue chain is Pantothenate kinase (318 aa).

96–103 (GSVSVGKS) contacts ATP.

Belongs to the prokaryotic pantothenate kinase family.

It is found in the cytoplasm. It catalyses the reaction (R)-pantothenate + ATP = (R)-4'-phosphopantothenate + ADP + H(+). It participates in cofactor biosynthesis; coenzyme A biosynthesis; CoA from (R)-pantothenate: step 1/5. The sequence is that of Pantothenate kinase from Bradyrhizobium sp. (strain BTAi1 / ATCC BAA-1182).